Consider the following 138-residue polypeptide: Thyrotropin subunit beta (138 aa).

The N-terminal stretch at 1–20 is a signal peptide; that stretch reads MTAIFLMSMLFGLACGQAMS. Cystine bridges form between C22-C72, C36-C87, C39-C125, C47-C103, C51-C105, and C108-C115. An N-linked (GlcNAc...) asparagine glycan is attached at N43. The propeptide occupies 133–138; that stretch reads VLEFSI.

It belongs to the glycoprotein hormones subunit beta family. Heterodimer of a common alpha chain and a unique beta chain which confers biological specificity to thyrotropin, lutropin, follitropin and gonadotropin.

It is found in the secreted. Functionally, indispensable for the control of thyroid structure and metabolism. In Sus scrofa (Pig), this protein is Thyrotropin subunit beta (TSHB).